Here is a 270-residue protein sequence, read N- to C-terminus: Thymidine kinase 2, mitochondrial (270 aa).

Residues 1–38 (MLLRSLRSWAARSPRSVGPGSSGSPGSLDSGAGPLWAP) constitute a mitochondrion transit peptide. The segment at 1–54 (MLLRSLRSWAARSPRSVGPGSSGSPGSLDSGAGPLWAPRRAWPPDKDRENDKEK) is disordered. Low complexity predominate over residues 13 to 34 (SPRSVGPGSSGSPGSLDSGAGP). The span at 42 to 54 (WPPDKDRENDKEK) shows a compositional bias: basic and acidic residues. 62–70 (GNIASGKTT) serves as a coordination point for ATP. The active-site Proton acceptor is glutamate 138.

The protein belongs to the DCK/DGK family. In terms of assembly, homodimer. As to expression, found in most tissues; highly expressed in liver.

It is found in the mitochondrion. The catalysed reaction is thymidine + ATP = dTMP + ADP + H(+). It carries out the reaction 2'-deoxycytidine + ATP = dCMP + ADP + H(+). The enzyme catalyses 2'-deoxyuridine + ATP = dUMP + ADP + H(+). In terms of biological role, phosphorylates thymidine, deoxycytidine, and deoxyuridine in the mitochondrial matrix. In non-replicating cells, where cytosolic dNTP synthesis is down-regulated, mtDNA synthesis depends solely on TK2 and DGUOK. The sequence is that of Thymidine kinase 2, mitochondrial (Tk2) from Mus musculus (Mouse).